Consider the following 443-residue polypeptide: D-aminoacyl-tRNA deacylase (443 aa).

It belongs to the DtdA deacylase family. Monomer. The cofactor is Zn(2+).

The catalysed reaction is a D-aminoacyl-tRNA + H2O = a tRNA + a D-alpha-amino acid + H(+). It carries out the reaction glycyl-tRNA(Ala) + H2O = tRNA(Ala) + glycine + H(+). Functionally, D-aminoacyl-tRNA deacylase with broad substrate specificity. By recycling D-aminoacyl-tRNA to D-amino acids and free tRNA molecules, this enzyme counteracts the toxicity associated with the formation of D-aminoacyl-tRNA entities in vivo. In Methanocorpusculum labreanum (strain ATCC 43576 / DSM 4855 / Z), this protein is D-aminoacyl-tRNA deacylase.